A 52-amino-acid polypeptide reads, in one-letter code: ATP synthase F(1) complex subunit epsilon, mitochondrial (52 aa).

N6-acetyllysine; alternate occurs at positions 21, 32, and 37. Residues Lys-21, Lys-32, and Lys-37 each carry the N6-succinyllysine; alternate modification. An N6-acetyllysine modification is found at Lys-44.

The protein belongs to the eukaryotic ATPase epsilon family. As to quaternary structure, component of the ATP synthase complex composed at least of ATP5F1A/subunit alpha, ATP5F1B/subunit beta, ATP5MC1/subunit c (homooctomer), MT-ATP6/subunit a, MT-ATP8/subunit 8, ATP5ME/subunit e, ATP5MF/subunit f, ATP5MG/subunit g, ATP5MK/subunit k, ATP5MJ/subunit j, ATP5F1C/subunit gamma, ATP5F1D/subunit delta, ATP5F1E/subunit epsilon, ATP5PF/subunit F6, ATP5PB/subunit b, ATP5PD/subunit d, ATP5PO/subunit OSCP. ATP synthase complex consists of a soluble F(1) head domain (subunits alpha(3) and beta(3)) - the catalytic core - and a membrane F(0) domain - the membrane proton channel (subunits c, a, 8, e, f, g, k and j). These two domains are linked by a central stalk (subunits gamma, delta, and epsilon) rotating inside the F1 region and a stationary peripheral stalk (subunits F6, b, d, and OSCP).

Its subcellular location is the mitochondrion. It localises to the mitochondrion inner membrane. Its function is as follows. Subunit epsilon, of the mitochondrial membrane ATP synthase complex (F(1)F(0) ATP synthase or Complex V) that produces ATP from ADP in the presence of a proton gradient across the membrane which is generated by electron transport complexes of the respiratory chain. ATP synthase complex consist of a soluble F(1) head domain - the catalytic core - and a membrane F(1) domain - the membrane proton channel. These two domains are linked by a central stalk rotating inside the F(1) region and a stationary peripheral stalk. During catalysis, ATP synthesis in the catalytic domain of F(1) is coupled via a rotary mechanism of the central stalk subunits to proton translocation. In vivo, can only synthesize ATP although its ATP hydrolase activity can be activated artificially in vitro. May be essential for the assembly of F(1) and may play an important role in the incorporation of the hydrophobic subunit c into the F(1)-c oligomer rotor of the mitochondrial ATP synthase complex. The chain is ATP synthase F(1) complex subunit epsilon, mitochondrial from Mus musculus (Mouse).